Here is a 368-residue protein sequence, read N- to C-terminus: Agmatine deiminase (368 aa).

The active-site Amidino-cysteine intermediate is Cys357.

It belongs to the agmatine deiminase family. Homodimer.

The enzyme catalyses agmatine + H2O = N-carbamoylputrescine + NH4(+). It functions in the pathway amine and polyamine biosynthesis; putrescine biosynthesis via agmatine pathway; N-carbamoylputrescine from agmatine: step 1/1. Its function is as follows. Mediates the hydrolysis of agmatine into N-carbamoylputrescine in the arginine decarboxylase (ADC) pathway of putrescine biosynthesis, a basic polyamine. The chain is Agmatine deiminase from Pseudomonas fluorescens (strain ATCC BAA-477 / NRRL B-23932 / Pf-5).